We begin with the raw amino-acid sequence, 952 residues long: Leucine--tRNA ligase (952 aa).

The 'HIGH' region signature appears at 48–58 (PYLNGVLHAGH). The 'KMSKS' region motif lies at 644-648 (KLSKS). K647 lines the ATP pocket.

Belongs to the class-I aminoacyl-tRNA synthetase family.

It is found in the cytoplasm. The enzyme catalyses tRNA(Leu) + L-leucine + ATP = L-leucyl-tRNA(Leu) + AMP + diphosphate. The sequence is that of Leucine--tRNA ligase from Methanococcus vannielii (strain ATCC 35089 / DSM 1224 / JCM 13029 / OCM 148 / SB).